A 347-amino-acid polypeptide reads, in one-letter code: Heat-inducible transcription repressor HrcA (347 aa).

Belongs to the HrcA family.

Negative regulator of class I heat shock genes (grpE-dnaK-dnaJ and groELS operons). Prevents heat-shock induction of these operons. The chain is Heat-inducible transcription repressor HrcA from Lactobacillus delbrueckii subsp. bulgaricus (strain ATCC BAA-365 / Lb-18).